We begin with the raw amino-acid sequence, 110 residues long: Protein E7 (110 aa).

The E7 terminal domain stretch occupies residues 1–47 (MHGPKPTVQEIVLELCPCNEIEPVDLVCHEQLGDSDDEIDEPDHAVN). An LXCXE motif; interaction with host RB1 and TMEM173/STING motif is present at residues 26 to 30 (LVCHE). Residues 69–105 (CCKCNNLLQLVVEASRENLRNVELLFMDSLNFVCPWC) fold into a zinc finger. Positions 87–95 (LRNVELLFM) match the Nuclear export signal motif.

The protein belongs to the papillomaviridae E7 protein family. In terms of assembly, homodimer. Homooligomer. Interacts with host RB1; this interaction induces dissociation of RB1-E2F1 complex thereby disrupting RB1 activity. Interacts with host EP300; this interaction represses EP300 transcriptional activity. Interacts with protein E2; this interaction inhibits E7 oncogenic activity. Interacts with host TMEM173/STING; this interaction impairs the ability of TMEM173/STING to sense cytosolic DNA and promote the production of type I interferon (IFN-alpha and IFN-beta). Highly phosphorylated.

The protein localises to the host cytoplasm. Its subcellular location is the host nucleus. Its function is as follows. Plays a role in viral genome replication by driving entry of quiescent cells into the cell cycle. Stimulation of progression from G1 to S phase allows the virus to efficiently use the cellular DNA replicating machinery to achieve viral genome replication. E7 protein has both transforming and trans-activating activities. Induces the disassembly of the E2F1 transcription factor from RB1, with subsequent transcriptional activation of E2F1-regulated S-phase genes. Interferes with host histone deacetylation mediated by HDAC1 and HDAC2, leading to transcription activation. Also plays a role in the inhibition of both antiviral and antiproliferative functions of host interferon alpha. Interaction with host TMEM173/STING impairs the ability of TMEM173/STING to sense cytosolic DNA and promote the production of type I interferon (IFN-alpha and IFN-beta). This is Protein E7 from Human papillomavirus type ME180.